Consider the following 367-residue polypeptide: MINSNDRQSTLVVAMSGGVDSSVVAGILCEQGYNVIGITLQLYDHGMATAKKNACCAGQDIYDAKMVANKLGMPHYVLDYESKFKESVIDNFVDSYLRGETPLPCVQCNKSVKFRDLIKTAKELGADKLVTGHYVRKINGDNGPELHMGLDPLKDQSYFLFATTKEQLEYLDFPLGALTKDETRKLASKFGLEVADKPDSQDICFVPDGNYKNVINKIRPNASESGKILHINGFELGTHSGIINYTIGQRRGLGISYHEPLYVIKIDPNSNIVYVGPESALNVQEFVIKDVNWLAGSLKDGEKLEVSVKVRSTRPPRLAEISKLEGDRMKVKFLSEEKAVAPGQACVIYDGTRVLGGGWITRDVIPA.

ATP-binding positions include 14–21 (AMSGGVDS) and L40. Catalysis depends on C108, which acts as the Nucleophile. C108 and C204 are disulfide-bonded. ATP is bound at residue G132. The segment at 154 to 156 (KDQ) is interaction with tRNA. The Cysteine persulfide intermediate role is filled by C204.

It belongs to the MnmA/TRMU family.

Its subcellular location is the cytoplasm. The enzyme catalyses S-sulfanyl-L-cysteinyl-[protein] + uridine(34) in tRNA + AH2 + ATP = 2-thiouridine(34) in tRNA + L-cysteinyl-[protein] + A + AMP + diphosphate + H(+). Its function is as follows. Catalyzes the 2-thiolation of uridine at the wobble position (U34) of tRNA, leading to the formation of s(2)U34. In Rickettsia bellii (strain OSU 85-389), this protein is tRNA-specific 2-thiouridylase MnmA.